A 150-amino-acid chain; its full sequence is Ribosome maturation factor RimP (150 aa).

The protein belongs to the RimP family.

The protein resides in the cytoplasm. Its function is as follows. Required for maturation of 30S ribosomal subunits. This is Ribosome maturation factor RimP from Thermotoga petrophila (strain ATCC BAA-488 / DSM 13995 / JCM 10881 / RKU-1).